Reading from the N-terminus, the 577-residue chain is Guanine nucleotide-binding protein-like 3-like protein (577 aa).

Residues 1–30 (MMKIRHKNKKPGKGSKGCKKPARQNGKKVT) are compositionally biased toward basic residues. The disordered stretch occupies residues 1–75 (MMKIRHKNKK…VAREQERQRH (75 aa)). A required for nucleolar localization region spans residues 9–28 (KKPGKGSKGCKKPARQNGKK). Basic and acidic residues predominate over residues 42–75 (GNDHASREAELKKKRVEEMREKQQVAREQERQRH). Residues 43 to 103 (NDHASREAEL…QKEEVLQELN (61 aa)) are a coiled coil. The CP-type G domain maps to 118–304 (YKEFRKVVEY…LLDAPGIVPG (187 aa)). GTP contacts are provided by residues 166–169 (NKID), 253–260 (GLPNVGKS), and 297–300 (DAPG).

Belongs to the TRAFAC class YlqF/YawG GTPase family. As to quaternary structure, interacts with MDM2; this interaction, which occurs in the nucleoplasm, stabilizes MDM2. Indirectly interacts with TP53, via MDM2-binding. Interacts with TERF1; this interaction probably occurs in the nucleoplasm and is increased during mitosis, when the nucleolus is disassembled. This binding may promote TERF1 homodimerization. Interacts with TERT.

It localises to the nucleus. The protein localises to the nucleolus. In terms of biological role, stabilizes TERF1 telomeric association by preventing TERF1 recruitment by PML. Stabilizes TERF1 protein by preventing its ubiquitination and hence proteasomal degradation. Does so by interfering with TERF1-binding to FBXO4 E3 ubiquitin-protein ligase. Required for cell proliferation. By stabilizing TRF1 protein during mitosis, promotes metaphase-to-anaphase transition. Stabilizes MDM2 protein by preventing its ubiquitination, and hence proteasomal degradation. By acting on MDM2, may affect TP53 activity. Required for normal processing of ribosomal pre-rRNA. Binds GTP. This Mus musculus (Mouse) protein is Guanine nucleotide-binding protein-like 3-like protein (Gnl3l).